The sequence spans 333 residues: MTKTIIDQAGATPGAIRTREGLVSAYRTELAIAGAIVLLVLAVGTQVPQAMSWGNFANITQAGAPLIIMSLGVLLVVITGGIDLSVGSVFSLTGMVTAQAMASGLDVSAALIGLGVGLVFGSINGFLVTVAGLAPFVVTLITFAVAGSLAFIVTNGRSMPIGDPDFWLLNSGSLIPGVPNYILFCIVLLVVIEIFLKKMVAGRWFYAVGSSAAAARLLGIPVKRTQFFAYVASSLLASFSGLLTISYILNAESTAGSSLMLQAIAAVVIGGASLLGGTGTAVGAVLGALMITVIQNGVNLIGINSFWQGSVTGLAILIAVLIDRFSKSRRGAV.

10 consecutive transmembrane segments (helical) span residues 30–50, 62–82, 84–104, 110–130, 133–153, 175–195, 228–248, 253–273, 274–294, and 300–320; these read LAIA…VPQA, AGAP…TGGI, LSVG…MASG, ALIG…LVTV, LAPF…AFIV, IPGV…IEIF, FAYV…ISYI, STAG…GGAS, LLGG…ITVI, and LIGI…LIAV.

The protein belongs to the binding-protein-dependent transport system permease family. AraH/RbsC subfamily.

The protein localises to the cell inner membrane. Functionally, probably part of the binding-protein-dependent transport system y4mIJK. This system probably transports a sugar. Probably responsible for the translocation of the substrate across the membrane. The polypeptide is Probable ABC transporter permease protein y4mJ (Sinorhizobium fredii (strain NBRC 101917 / NGR234)).